Here is a 185-residue protein sequence, read N- to C-terminus: MESNLSSFNKIEQQINGSRKISNYLIGGMLTIGGIGFILASISSYTGRDLLPLGNPSSLLFIPQGIIMGAYGVIANLLNIYLWYLVFINFGSGYNSFDKVSQSVEIKRKGLFKDIEVKLNFDEIKSVKLDISEGFNPRRRIALVLKGRKKALPLSGAGELKPLLQVEEEGARLAKFLNVNLEGLK.

The next 2 helical transmembrane spans lie at 24-44 and 66-86; these read YLIG…SISS and IIMG…WYLV.

This sequence belongs to the Ycf4 family.

The protein resides in the cellular thylakoid membrane. Functionally, seems to be required for the assembly of the photosystem I complex. In Prochlorococcus marinus (strain MIT 9515), this protein is Photosystem I assembly protein Ycf4.